Here is a 294-residue protein sequence, read N- to C-terminus: Phosphatidylserine decarboxylase proenzyme (294 aa).

Residues Asp-92, His-149, and Ser-252 each act as charge relay system; for autoendoproteolytic cleavage activity in the active site. The active-site Schiff-base intermediate with substrate; via pyruvic acid; for decarboxylase activity is the Ser-252. At Ser-252 the chain carries Pyruvic acid (Ser); by autocatalysis.

Belongs to the phosphatidylserine decarboxylase family. PSD-B subfamily. Prokaryotic type I sub-subfamily. In terms of assembly, heterodimer of a large membrane-associated beta subunit and a small pyruvoyl-containing alpha subunit. It depends on pyruvate as a cofactor. Post-translationally, is synthesized initially as an inactive proenzyme. Formation of the active enzyme involves a self-maturation process in which the active site pyruvoyl group is generated from an internal serine residue via an autocatalytic post-translational modification. Two non-identical subunits are generated from the proenzyme in this reaction, and the pyruvate is formed at the N-terminus of the alpha chain, which is derived from the carboxyl end of the proenzyme. The autoendoproteolytic cleavage occurs by a canonical serine protease mechanism, in which the side chain hydroxyl group of the serine supplies its oxygen atom to form the C-terminus of the beta chain, while the remainder of the serine residue undergoes an oxidative deamination to produce ammonia and the pyruvoyl prosthetic group on the alpha chain. During this reaction, the Ser that is part of the protease active site of the proenzyme becomes the pyruvoyl prosthetic group, which constitutes an essential element of the active site of the mature decarboxylase.

The protein localises to the cell membrane. It catalyses the reaction a 1,2-diacyl-sn-glycero-3-phospho-L-serine + H(+) = a 1,2-diacyl-sn-glycero-3-phosphoethanolamine + CO2. It functions in the pathway phospholipid metabolism; phosphatidylethanolamine biosynthesis; phosphatidylethanolamine from CDP-diacylglycerol: step 2/2. Functionally, catalyzes the formation of phosphatidylethanolamine (PtdEtn) from phosphatidylserine (PtdSer). In Bordetella avium (strain 197N), this protein is Phosphatidylserine decarboxylase proenzyme.